A 126-amino-acid polypeptide reads, in one-letter code: uncharacterized protein (126 aa).

This is an uncharacterized protein from Rickettsia prowazekii (strain Madrid E).